Reading from the N-terminus, the 594-residue chain is DNA ligase (594 aa).

Glu-256 lines the ATP pocket. The active-site N6-AMP-lysine intermediate is Lys-258. 6 residues coordinate ATP: Arg-263, Arg-279, Glu-309, Phe-349, Arg-426, and Lys-432.

It belongs to the ATP-dependent DNA ligase family. Mg(2+) serves as cofactor.

The catalysed reaction is ATP + (deoxyribonucleotide)n-3'-hydroxyl + 5'-phospho-(deoxyribonucleotide)m = (deoxyribonucleotide)n+m + AMP + diphosphate.. Functionally, DNA ligase that seals nicks in double-stranded DNA during DNA replication, DNA recombination and DNA repair. In Ignicoccus hospitalis (strain KIN4/I / DSM 18386 / JCM 14125), this protein is DNA ligase.